The following is a 397-amino-acid chain: Lysophospholipid transporter LplT (397 aa).

Topologically, residues 1 to 17 are periplasmic; the sequence is MSESVHTNTSLWSKGMK. A helical membrane pass occupies residues 18 to 38; the sequence is AVIVAQFLSAFGDNALLFATL. Over 39–52 the chain is Cytoplasmic; the sequence is ALLKAQFYPEWSQP. The helical transmembrane segment at 53–73 threads the bilayer; sequence ILQMVFVGAYILFAPFVGQVA. Residues 74-90 lie on the Periplasmic side of the membrane; the sequence is DSFAKGRVMMFANGLKL. The helical transmembrane segment at 91 to 111 threads the bilayer; sequence LGAASICFGINPFLGYTLVGV. The Cytoplasmic portion of the chain corresponds to 112–144; the sequence is GAAAYSPAKYGILGELTTGSKLVKANGLMEAST. Residues 145–165 form a helical membrane-spanning segment; sequence IAAILLGSVAGGVLADWHILV. Residue alanine 166 is a topological domain, periplasmic. A helical transmembrane segment spans residues 167–187; that stretch reads LVACALAYGGAVVANIYIPKL. Residues 188-226 are Cytoplasmic-facing; sequence AAARPGQSWNLISMTRSFLNACTSLWRNGETRFSLVGTS. Residues 227-247 form a helical membrane-spanning segment; it reads LFWGAGVTLRFLLVLWVPVAL. Over 248–256 the chain is Periplasmic; that stretch reads GITDNATPT. Residues 257 to 277 traverse the membrane as a helical segment; sequence YLNAMVAIGIVVGAGAAAKLV. Residues 278–280 are Cytoplasmic-facing; it reads TLE. Residues 281–301 traverse the membrane as a helical segment; sequence TVSRCMPAGILIGVVVLIFSL. Residues 302–304 are Periplasmic-facing; the sequence is QHE. A helical membrane pass occupies residues 305–325; that stretch reads LLPAYALLMLIGVLGGFFVVP. At 326–343 the chain is on the cytoplasmic side; it reads LNALLQERGKKSVGAGNA. Residues 344 to 364 traverse the membrane as a helical segment; that stretch reads IAVQNLGENSAMLLMLGIYSL. At 365–366 the chain is on the periplasmic side; it reads AV. Residues 367-387 traverse the membrane as a helical segment; the sequence is MVGIPVVPIGIGFGALFALAI. Topologically, residues 388–397 are cytoplasmic; it reads TALWIWQRRH.

Belongs to the major facilitator superfamily. LplT (TC 2.A.1.42) family.

It is found in the cell inner membrane. Its function is as follows. Catalyzes the facilitated diffusion of 2-acyl-glycero-3-phosphoethanolamine (2-acyl-GPE) into the cell. The sequence is that of Lysophospholipid transporter LplT from Escherichia coli O81 (strain ED1a).